Reading from the N-terminus, the 169-residue chain is uncharacterized protein (169 aa).

This is an uncharacterized protein from Mycoplasma pneumoniae (strain ATCC 29342 / M129 / Subtype 1) (Mycoplasmoides pneumoniae).